Here is a 282-residue protein sequence, read N- to C-terminus: Protein NEOXANTHIN-DEFICIENT 1 (282 aa).

Functionally, required for neoxanthin biosynthesis. Probably not involved directly in the enzymatic conversion of violaxanthin to neoxanthin. Is necessary but not sufficient for neoxanthin synthesis. This is Protein NEOXANTHIN-DEFICIENT 1 from Arabidopsis thaliana (Mouse-ear cress).